The primary structure comprises 470 residues: Glutamate--tRNA ligase (470 aa).

Residues 9–19 carry the 'HIGH' region motif; that stretch reads PSPTGFLHVGG. The short motif at 236-240 is the 'KMSKS' region element; sequence RLSKR. K239 is a binding site for ATP.

This sequence belongs to the class-I aminoacyl-tRNA synthetase family. Glutamate--tRNA ligase type 1 subfamily. Monomer.

The protein resides in the cytoplasm. It carries out the reaction tRNA(Glu) + L-glutamate + ATP = L-glutamyl-tRNA(Glu) + AMP + diphosphate. Functionally, catalyzes the attachment of glutamate to tRNA(Glu) in a two-step reaction: glutamate is first activated by ATP to form Glu-AMP and then transferred to the acceptor end of tRNA(Glu). The chain is Glutamate--tRNA ligase from Legionella pneumophila (strain Paris).